The chain runs to 461 residues: tRNA modification GTPase MnmE (461 aa).

3 residues coordinate (6S)-5-formyl-5,6,7,8-tetrahydrofolate: arginine 20, glutamate 85, and lysine 124. Residues 221–383 (GIPVAIIGET…LQQLLTEVSS (163 aa)) enclose the TrmE-type G domain. Asparagine 231 serves as a coordination point for K(+). GTP is bound by residues 231–236 (NAGKST), 250–256 (SDIHGTT), and 275–278 (DTAG). Residue serine 235 coordinates Mg(2+). K(+) is bound by residues serine 250, isoleucine 252, and threonine 255. A Mg(2+)-binding site is contributed by threonine 256. A (6S)-5-formyl-5,6,7,8-tetrahydrofolate-binding site is contributed by lysine 461.

It belongs to the TRAFAC class TrmE-Era-EngA-EngB-Septin-like GTPase superfamily. TrmE GTPase family. In terms of assembly, homodimer. Heterotetramer of two MnmE and two MnmG subunits. The cofactor is K(+).

The protein localises to the cytoplasm. Functionally, exhibits a very high intrinsic GTPase hydrolysis rate. Involved in the addition of a carboxymethylaminomethyl (cmnm) group at the wobble position (U34) of certain tRNAs, forming tRNA-cmnm(5)s(2)U34. This is tRNA modification GTPase MnmE from Parabacteroides distasonis (strain ATCC 8503 / DSM 20701 / CIP 104284 / JCM 5825 / NCTC 11152).